The primary structure comprises 162 residues: MHLPATIVFFTCTGVFSTTVFAKYRANPALCKVPIKSATGNCRNGNDLPSWLYGYNNITKKCVQYPTCFKRLAFESNEICLETCNKQSRCLQPPETGIFDIGWSTYYVYNSRKNMCKPVKKMKFRKTTSKQKNLFNSEEECQQECMPSTTPIYNVAQGTYPR.

The signal sequence occupies residues 1–17; the sequence is MHLPATIVFFTCTGVFS. Residue Asn57 is glycosylated (N-linked (GlcNAc...) asparagine). The BPTI/Kunitz inhibitor domain maps to 90–145; sequence CLQPPETGIFDIGWSTYYVYNSRKNMCKPVKKMKFRKTTSKQKNLFNSEEECQQEC. Disulfide bonds link Cys90–Cys145 and Cys116–Cys141.

As to quaternary structure, interacts with host coagulation factor XII (F12) (inactive and activated) (via fibronectin type II domain). Interacts with host high molecular weight kininogen (KNG1) (via amino acids 421-466 and 459-513). Salivary gland.

The protein localises to the secreted. With respect to regulation, zn(2+) modulates binding to host coagulation factor XII (F12) and high molecular weight kininogen (KNG1). In terms of biological role, anticoagulant protein. Inhibits activation of host plasma kallikrein-kinin system by interfering with reciprocal activation between coagulation factor XII (F12) and prekallikrein (KLKB1) without affecting their amidolytic activities. The polypeptide is Haemaphysalin (Haemaphysalis longicornis (Bush tick)).